The primary structure comprises 178 residues: Large ribosomal subunit protein uL6 (178 aa).

The protein belongs to the universal ribosomal protein uL6 family. Part of the 50S ribosomal subunit.

In terms of biological role, this protein binds to the 23S rRNA, and is important in its secondary structure. It is located near the subunit interface in the base of the L7/L12 stalk, and near the tRNA binding site of the peptidyltransferase center. In Nautilia profundicola (strain ATCC BAA-1463 / DSM 18972 / AmH), this protein is Large ribosomal subunit protein uL6.